Reading from the N-terminus, the 147-residue chain is Hemoglobin subunit epsilon (147 aa).

Residues 3–147 (HFTAEEKAAI…VAIALGHKYH (145 aa)) enclose the Globin domain. Phosphoserine occurs at positions 14 and 51. Positions 64 and 93 each coordinate heme b.

The protein belongs to the globin family. Heterotetramer of two alpha chains and two epsilon chains in early embryonic hemoglobin Gower-2; two zeta chains and two epsilon chains in early embryonic hemoglobin Gower-1. In terms of tissue distribution, red blood cells.

The epsilon chain is a beta-type chain of early mammalian embryonic hemoglobin. This Callithrix jacchus (White-tufted-ear marmoset) protein is Hemoglobin subunit epsilon (HBE1).